Here is a 443-residue protein sequence, read N- to C-terminus: Multidrug resistance protein MdtA (443 aa).

A signal peptide spans 1–24 (MKAQSKRTSRLLILLGIAVAIIVA). Polar residues predominate over residues 36 to 46 (DGSTGAQQHAV). 2 disordered regions span residues 36–57 (DGST…GGRR) and 398–443 (TPRS…AEKS). Basic and acidic residues predominate over residues 409–419 (AAEKPATAEKA). The span at 427-443 (SATGASAGSTTTAAEKS) shows a compositional bias: low complexity.

The protein belongs to the membrane fusion protein (MFP) (TC 8.A.1) family. In terms of assembly, part of a tripartite efflux system composed of MdtA, MdtB and MdtC.

The protein resides in the cell inner membrane. This is Multidrug resistance protein MdtA from Yersinia enterocolitica serotype O:8 / biotype 1B (strain NCTC 13174 / 8081).